Here is a 402-residue protein sequence, read N- to C-terminus: Xylose/arabinose-binding protein XylF (402 aa).

Residues Gly38 to Ala58 traverse the membrane as a helical segment.

It belongs to the bacterial solute-binding protein 2 family. The complex is composed of two ATP-binding proteins (XylG), two transmembrane proteins (XylH) and a solute-binding protein (XylF).

The protein resides in the cell membrane. Its function is as follows. Part of the ABC transporter complex XylFGH involved in the uptake of xylose and arabinose. In Sulfolobus acidocaldarius (strain ATCC 33909 / DSM 639 / JCM 8929 / NBRC 15157 / NCIMB 11770), this protein is Xylose/arabinose-binding protein XylF.